Consider the following 332-residue polypeptide: Probable electron transfer flavoprotein subunit alpha, mitochondrial (332 aa).

Residue 275–303 participates in FAD binding; the sequence is LYIAIGISGAIQHLAGMKDSKVIVAINKD.

The protein belongs to the ETF alpha-subunit/FixB family. As to quaternary structure, heterodimer of an alpha and a beta subunit. It depends on FAD as a cofactor.

It localises to the mitochondrion matrix. In terms of biological role, the electron transfer flavoprotein serves as a specific electron acceptor for several dehydrogenases, including five acyl-CoA dehydrogenases, glutaryl-CoA and sarcosine dehydrogenase. It transfers the electrons to the main mitochondrial respiratory chain via ETF-ubiquinone oxidoreductase (ETF dehydrogenase). This Caenorhabditis elegans protein is Probable electron transfer flavoprotein subunit alpha, mitochondrial.